The following is a 79-amino-acid chain: D-alanyl carrier protein (79 aa).

The region spanning 1–77 is the Carrier domain; it reads MSTKETVIDL…KIIQGIEELQ (77 aa). S35 is modified (O-(pantetheine 4'-phosphoryl)serine).

The protein belongs to the DltC family. Post-translationally, 4'-phosphopantetheine is transferred from CoA to a specific serine of apo-DCP.

The protein resides in the cytoplasm. The protein operates within cell wall biogenesis; lipoteichoic acid biosynthesis. Carrier protein involved in the D-alanylation of lipoteichoic acid (LTA). The loading of thioester-linked D-alanine onto DltC is catalyzed by D-alanine--D-alanyl carrier protein ligase DltA. The DltC-carried D-alanyl group is further transferred to cell membrane phosphatidylglycerol (PG) by forming an ester bond, probably catalyzed by DltD. D-alanylation of LTA plays an important role in modulating the properties of the cell wall in Gram-positive bacteria, influencing the net charge of the cell wall. The polypeptide is D-alanyl carrier protein (Streptococcus equi subsp. equi (strain 4047)).